Here is a 280-residue protein sequence, read N- to C-terminus: Coiled-coil domain-containing protein 106 (280 aa).

The stretch at 63–101 (TQLHMALERNSWLQKRIEDLEEERDFLRCQLDKFISSAR) forms a coiled coil. Residues 103-121 (EAEDHCRMKPGPRRMEGDS) are compositionally biased toward basic and acidic residues. A disordered region spans residues 103–176 (EAEDHCRMKP…KPKARERQRV (74 aa)). Residue Ser-130 is modified to Phosphoserine. Over residues 133–146 (ESAASSLSGASEEG) the composition is skewed to low complexity. The Bipartite nuclear localization signal signature appears at 151–164 (RRRQKQKGGASRRR). Basic residues predominate over residues 152–168 (RRQKQKGGASRRRFGKP).

In terms of assembly, interacts with p53/TP53.

The protein localises to the nucleus. Its function is as follows. Promotes the degradation of p53/TP53 protein and inhibits its transactivity. The protein is Coiled-coil domain-containing protein 106 (CCDC106) of Homo sapiens (Human).